Consider the following 128-residue polypeptide: ATP synthase epsilon chain (128 aa).

This sequence belongs to the ATPase epsilon chain family. As to quaternary structure, F-type ATPases have 2 components, CF(1) - the catalytic core - and CF(0) - the membrane proton channel. CF(1) has five subunits: alpha(3), beta(3), gamma(1), delta(1), epsilon(1). CF(0) has three main subunits: a, b and c.

It localises to the cell inner membrane. Produces ATP from ADP in the presence of a proton gradient across the membrane. The sequence is that of ATP synthase epsilon chain from Sulfurovum sp. (strain NBC37-1).